The sequence spans 459 residues: Ribulose bisphosphate carboxylase large chain (459 aa).

Lys4 is modified (N6,N6,N6-trimethyllysine). Positions 113 and 163 each coordinate substrate. The active-site Proton acceptor is the Lys165. Lys167 contacts substrate. Positions 191, 193, and 194 each coordinate Mg(2+). The residue at position 191 (Lys191) is an N6-carboxylysine. The active-site Proton acceptor is His284. Substrate contacts are provided by Arg285, His317, and Ser369.

The protein belongs to the RuBisCO large chain family. Type I subfamily. As to quaternary structure, heterohexadecamer of 8 large chains and 8 small chains; disulfide-linked. The disulfide link is formed within the large subunit homodimers. Mg(2+) is required as a cofactor. Post-translationally, the disulfide bond which can form in the large chain dimeric partners within the hexadecamer appears to be associated with oxidative stress and protein turnover.

It is found in the plastid. The protein localises to the chloroplast. It catalyses the reaction 2 (2R)-3-phosphoglycerate + 2 H(+) = D-ribulose 1,5-bisphosphate + CO2 + H2O. The catalysed reaction is D-ribulose 1,5-bisphosphate + O2 = 2-phosphoglycolate + (2R)-3-phosphoglycerate + 2 H(+). RuBisCO catalyzes two reactions: the carboxylation of D-ribulose 1,5-bisphosphate, the primary event in carbon dioxide fixation, as well as the oxidative fragmentation of the pentose substrate in the photorespiration process. Both reactions occur simultaneously and in competition at the same active site. In Cephalotus follicularis (Albany pitcher plant), this protein is Ribulose bisphosphate carboxylase large chain.